The sequence spans 247 residues: UPF0246 protein LSEI_2080 (247 aa).

Belongs to the UPF0246 family.

The protein is UPF0246 protein LSEI_2080 of Lacticaseibacillus paracasei (strain ATCC 334 / BCRC 17002 / CCUG 31169 / CIP 107868 / KCTC 3260 / NRRL B-441) (Lactobacillus paracasei).